A 35-amino-acid polypeptide reads, in one-letter code: MEVNILGLIATALFILIPTSFLIILYVKTEAVNDM.

Residues 5 to 25 traverse the membrane as a helical segment; sequence ILGLIATALFILIPTSFLIIL.

It belongs to the PsbM family. As to quaternary structure, PSII is composed of 1 copy each of membrane proteins PsbA, PsbB, PsbC, PsbD, PsbE, PsbF, PsbH, PsbI, PsbJ, PsbK, PsbL, PsbM, PsbT, PsbX, PsbY, PsbZ, Psb30/Ycf12, at least 3 peripheral proteins of the oxygen-evolving complex and a large number of cofactors. It forms dimeric complexes.

The protein localises to the plastid. It localises to the chloroplast thylakoid membrane. Functionally, one of the components of the core complex of photosystem II (PSII). PSII is a light-driven water:plastoquinone oxidoreductase that uses light energy to abstract electrons from H(2)O, generating O(2) and a proton gradient subsequently used for ATP formation. It consists of a core antenna complex that captures photons, and an electron transfer chain that converts photonic excitation into a charge separation. This subunit is found at the monomer-monomer interface. This chain is Photosystem II reaction center protein M, found in Oltmannsiellopsis viridis (Marine flagellate).